Consider the following 795-residue polypeptide: Phenylalanine--tRNA ligase beta subunit (795 aa).

One can recognise a tRNA-binding domain in the interval 39-148 (KSEFHGVVVG…KETLVGINVY (110 aa)). In terms of domain architecture, B5 spans 400–475 (HKNNTIRLHH…RIYEYNNVHL (76 aa)). Asp-453, Asp-459, and Asp-463 together coordinate Mg(2+). An FDX-ACB domain is found at 701-794 (SKFPTVRRDI…LQKKFQAVLR (94 aa)).

Belongs to the phenylalanyl-tRNA synthetase beta subunit family. Type 1 subfamily. As to quaternary structure, tetramer of two alpha and two beta subunits. Requires Mg(2+) as cofactor.

The protein localises to the cytoplasm. The catalysed reaction is tRNA(Phe) + L-phenylalanine + ATP = L-phenylalanyl-tRNA(Phe) + AMP + diphosphate + H(+). This is Phenylalanine--tRNA ligase beta subunit (pheT) from Buchnera aphidicola subsp. Acyrthosiphon pisum (strain APS) (Acyrthosiphon pisum symbiotic bacterium).